The following is a 166-amino-acid chain: 2-C-methyl-D-erythritol 2,4-cyclodiphosphate synthase (166 aa).

A divalent metal cation-binding residues include Asp11 and His13. 4-CDP-2-C-methyl-D-erythritol 2-phosphate contacts are provided by residues 11–13 (DVH) and 40–41 (HS). His48 provides a ligand contact to a divalent metal cation. 4-CDP-2-C-methyl-D-erythritol 2-phosphate contacts are provided by residues 62–64 (DLG), 135–138 (TTSD), Phe142, and Arg145.

Belongs to the IspF family. In terms of assembly, homotrimer. The cofactor is a divalent metal cation.

The enzyme catalyses 4-CDP-2-C-methyl-D-erythritol 2-phosphate = 2-C-methyl-D-erythritol 2,4-cyclic diphosphate + CMP. It functions in the pathway isoprenoid biosynthesis; isopentenyl diphosphate biosynthesis via DXP pathway; isopentenyl diphosphate from 1-deoxy-D-xylulose 5-phosphate: step 4/6. In terms of biological role, involved in the biosynthesis of isopentenyl diphosphate (IPP) and dimethylallyl diphosphate (DMAPP), two major building blocks of isoprenoid compounds. Catalyzes the conversion of 4-diphosphocytidyl-2-C-methyl-D-erythritol 2-phosphate (CDP-ME2P) to 2-C-methyl-D-erythritol 2,4-cyclodiphosphate (ME-CPP) with a corresponding release of cytidine 5-monophosphate (CMP). The chain is 2-C-methyl-D-erythritol 2,4-cyclodiphosphate synthase from Pseudarthrobacter chlorophenolicus (strain ATCC 700700 / DSM 12829 / CIP 107037 / JCM 12360 / KCTC 9906 / NCIMB 13794 / A6) (Arthrobacter chlorophenolicus).